Here is a 128-residue protein sequence, read N- to C-terminus: Phosphoribosyl-AMP cyclohydrolase (128 aa).

D77 contributes to the Mg(2+) binding site. C78 contributes to the Zn(2+) binding site. Positions 79 and 81 each coordinate Mg(2+). Zn(2+) contacts are provided by C95 and C102.

This sequence belongs to the PRA-CH family. In terms of assembly, homodimer. The cofactor is Mg(2+). Requires Zn(2+) as cofactor.

It is found in the cytoplasm. The catalysed reaction is 1-(5-phospho-beta-D-ribosyl)-5'-AMP + H2O = 1-(5-phospho-beta-D-ribosyl)-5-[(5-phospho-beta-D-ribosylamino)methylideneamino]imidazole-4-carboxamide. It participates in amino-acid biosynthesis; L-histidine biosynthesis; L-histidine from 5-phospho-alpha-D-ribose 1-diphosphate: step 3/9. Its function is as follows. Catalyzes the hydrolysis of the adenine ring of phosphoribosyl-AMP. This chain is Phosphoribosyl-AMP cyclohydrolase, found in Methylococcus capsulatus (strain ATCC 33009 / NCIMB 11132 / Bath).